We begin with the raw amino-acid sequence, 389 residues long: Chalcone synthase (389 aa).

C164 is a catalytic residue.

Belongs to the thiolase-like superfamily. Chalcone/stilbene synthases family.

The enzyme catalyses (E)-4-coumaroyl-CoA + 3 malonyl-CoA + 3 H(+) = 2',4,4',6'-tetrahydroxychalcone + 3 CO2 + 4 CoA. It functions in the pathway secondary metabolite biosynthesis; flavonoid biosynthesis. In terms of biological role, the primary product of this enzyme is 4,2',4',6'-tetrahydroxychalcone (also termed naringenin-chalcone or chalcone) which can under specific conditions spontaneously isomerize into naringenin. The chain is Chalcone synthase (CHS1) from Casuarina glauca (Swamp oak).